The sequence spans 309 residues: Tagatose-6-phosphate kinase (309 aa).

Belongs to the carbohydrate kinase PfkB family. LacC subfamily.

It carries out the reaction D-tagatofuranose 6-phosphate + ATP = D-tagatofuranose 1,6-bisphosphate + ADP + H(+). It participates in carbohydrate metabolism; D-tagatose 6-phosphate degradation; D-glyceraldehyde 3-phosphate and glycerone phosphate from D-tagatose 6-phosphate: step 1/2. In Streptococcus pyogenes serotype M5 (strain Manfredo), this protein is Tagatose-6-phosphate kinase.